The primary structure comprises 63 residues: Large ribosomal subunit protein bL28 (63 aa).

Belongs to the bacterial ribosomal protein bL28 family.

The chain is Large ribosomal subunit protein bL28 from Clostridium acetobutylicum (strain ATCC 824 / DSM 792 / JCM 1419 / IAM 19013 / LMG 5710 / NBRC 13948 / NRRL B-527 / VKM B-1787 / 2291 / W).